A 135-amino-acid chain; its full sequence is Large ribosomal subunit protein uL22 (135 aa).

This sequence belongs to the universal ribosomal protein uL22 family. Part of the 50S ribosomal subunit.

In terms of biological role, this protein binds specifically to 23S rRNA; its binding is stimulated by other ribosomal proteins, e.g. L4, L17, and L20. It is important during the early stages of 50S assembly. It makes multiple contacts with different domains of the 23S rRNA in the assembled 50S subunit and ribosome. Functionally, the globular domain of the protein is located near the polypeptide exit tunnel on the outside of the subunit, while an extended beta-hairpin is found that lines the wall of the exit tunnel in the center of the 70S ribosome. This chain is Large ribosomal subunit protein uL22, found in Malacoplasma penetrans (strain HF-2) (Mycoplasma penetrans).